A 137-amino-acid chain; its full sequence is MFIPKKSKYKKVFKGRIKGNTKGGSTLSFGDYGLKAMEAGRIQSKHIETARRVISRTLKRSGKVWIRIFPDTPVSKKPADVRMGKGKGSVEFWVFKAKPGRMLFEISSDVPMHLARLALEKATAKLPMKCKFVSNHN.

This sequence belongs to the universal ribosomal protein uL16 family. Part of the 50S ribosomal subunit.

In terms of biological role, binds 23S rRNA and is also seen to make contacts with the A and possibly P site tRNAs. This chain is Large ribosomal subunit protein uL16, found in Wolbachia pipientis wMel.